The chain runs to 321 residues: Fe-S cluster assembly protein DRE2 (321 aa).

Residues 1–131 (MERMLLLSPP…KPDFGPENIV (131 aa)) form an N-terminal SAM-like domain region. Residues 132 to 213 (PLKLGKRKPV…EETLLDGEDM (82 aa)) are linker. 4 residues coordinate [2Fe-2S] cluster: Cys-223, Cys-234, Cys-237, and Cys-239. The fe-S binding site A stretch occupies residues 223–239 (CRPKAGKRRRACKDCTC). Positions 284, 287, 295, and 298 each coordinate [4Fe-4S] cluster. Short sequence motifs (cx2C motif) lie at residues 284–287 (CGNC) and 295–298 (CDGC). The interval 284–298 (CGNCALGDAFRCDGC) is fe-S binding site B.

The protein belongs to the anamorsin family. Monomer. Interacts with TAH18. Interacts with MIA40. Requires [2Fe-2S] cluster as cofactor. The cofactor is [4Fe-4S] cluster.

It localises to the cytoplasm. Its subcellular location is the mitochondrion intermembrane space. Its function is as follows. Component of the cytosolic iron-sulfur (Fe-S) protein assembly (CIA) machinery required for the maturation of extramitochondrial Fe-S proteins. Part of an electron transfer chain functioning in an early step of cytosolic Fe-S biogenesis, facilitating the de novo assembly of a [4Fe-4S] cluster on the scaffold complex CFD1-NBP35. Electrons are transferred to DRE2 from NADPH via the FAD- and FMN-containing protein TAH18. TAH18-DRE2 are also required for the assembly of the diferric tyrosyl radical cofactor of ribonucleotide reductase (RNR), probably by providing electrons for reduction during radical cofactor maturation in the catalytic small subunit RNR2. The sequence is that of Fe-S cluster assembly protein DRE2 from Coccidioides immitis (strain RS) (Valley fever fungus).